Reading from the N-terminus, the 242-residue chain is 1-(5-phosphoribosyl)-5-[(5-phosphoribosylamino)methylideneamino] imidazole-4-carboxamide isomerase (242 aa).

Aspartate 8 acts as the Proton acceptor in catalysis. Aspartate 130 (proton donor) is an active-site residue.

The protein belongs to the HisA/HisF family.

It localises to the cytoplasm. It catalyses the reaction 1-(5-phospho-beta-D-ribosyl)-5-[(5-phospho-beta-D-ribosylamino)methylideneamino]imidazole-4-carboxamide = 5-[(5-phospho-1-deoxy-D-ribulos-1-ylimino)methylamino]-1-(5-phospho-beta-D-ribosyl)imidazole-4-carboxamide. The protein operates within amino-acid biosynthesis; L-histidine biosynthesis; L-histidine from 5-phospho-alpha-D-ribose 1-diphosphate: step 4/9. This is 1-(5-phosphoribosyl)-5-[(5-phosphoribosylamino)methylideneamino] imidazole-4-carboxamide isomerase from Thioalkalivibrio sulfidiphilus (strain HL-EbGR7).